Consider the following 332-residue polypeptide: MKLKLNWESALLALLIAEILLFGALNPRMLDINMLLFSTSDFICIGIVALPLTLVIISGGIDISLGSTIGLCAIALGVMTQAGWPLWLAVSLTLLLGLLCGLFNAALIHYTGINPLVITLGTLYLYGGGALLLSGMAGATGYEGIGGFPDSFTAFANLTLGGLPLPLVLFAIITFFFWLLAHRGRFGRHLFLLGQNPRAARYAALSVNGIPYVLYGLVGVASAVAALVMVSYFGSARSDLGRDLLMPALTAAVLGGANIYGGSGSILGTALAALLVGYLQQGLQMVGIPNQVSSALSGALLVVVVMGRSLSLHREWVRATWRRLFSHKTIGA.

Helical transmembrane passes span 5–25, 43–63, 83–103, 116–136, 160–180, 210–230, and 259–279; these read LNWESALLALLIAEILLFGAL, ICIGIVALPLTLVIISGGIDI, GWPLWLAVSLTLLLGLLCGLF, LVITLGTLYLYGGGALLLSGM, LGGLPLPLVLFAIITFFFWLL, IPYVLYGLVGVASAVAALVMV, and IYGGSGSILGTALAALLVGYL.

This sequence belongs to the binding-protein-dependent transport system permease family. AraH/RbsC subfamily. In terms of assembly, the complex is composed of two ATP-binding proteins (LsrA), two transmembrane proteins (LsrC and LsrD) and a solute-binding protein (LsrB).

Its subcellular location is the cell inner membrane. In terms of biological role, part of the ABC transporter complex LsrABCD involved in autoinducer 2 (AI-2) import. Probably responsible for the translocation of the substrate across the membrane. This Klebsiella pneumoniae subsp. pneumoniae (strain ATCC 700721 / MGH 78578) protein is Autoinducer 2 import system permease protein LsrD (lsrD).